Consider the following 505-residue polypeptide: Maturase K (505 aa).

This sequence belongs to the intron maturase 2 family. MatK subfamily.

Its subcellular location is the plastid. It localises to the chloroplast. Usually encoded in the trnK tRNA gene intron. Probably assists in splicing its own and other chloroplast group II introns. The protein is Maturase K of Gomphrena haageana (Haage's globe-amaranth).